Reading from the N-terminus, the 473-residue chain is JmjC domain-containing protein 4 (473 aa).

Residues 140 to 433 (PTDGLLTDFS…DFDHPYLDRN (294 aa)) enclose the JmjC domain. Positions 452–473 (TNKKNEKRPAEDDSPSQKKTCQ) are disordered.

Its subcellular location is the nucleus. Has a role in meiosis. In Schizosaccharomyces pombe (strain 972 / ATCC 24843) (Fission yeast), this protein is JmjC domain-containing protein 4 (jmj4).